Here is a 101-residue protein sequence, read N- to C-terminus: Large ribosomal subunit protein uL24 (101 aa).

This sequence belongs to the universal ribosomal protein uL24 family. Part of the 50S ribosomal subunit.

Functionally, one of two assembly initiator proteins, it binds directly to the 5'-end of the 23S rRNA, where it nucleates assembly of the 50S subunit. One of the proteins that surrounds the polypeptide exit tunnel on the outside of the subunit. The chain is Large ribosomal subunit protein uL24 from Borreliella burgdorferi (strain ATCC 35210 / DSM 4680 / CIP 102532 / B31) (Borrelia burgdorferi).